Here is a 363-residue protein sequence, read N- to C-terminus: UDP-N-acetylglucosamine--N-acetylmuramyl-(pentapeptide) pyrophosphoryl-undecaprenol N-acetylglucosamine transferase (363 aa).

Residues 7–9, asparagine 125, serine 196, isoleucine 251, and glutamine 296 each bind UDP-N-acetyl-alpha-D-glucosamine; that span reads TGG.

This sequence belongs to the glycosyltransferase 28 family. MurG subfamily.

Its subcellular location is the cell membrane. It carries out the reaction Mur2Ac(oyl-L-Ala-gamma-D-Glu-L-Lys-D-Ala-D-Ala)-di-trans,octa-cis-undecaprenyl diphosphate + UDP-N-acetyl-alpha-D-glucosamine = beta-D-GlcNAc-(1-&gt;4)-Mur2Ac(oyl-L-Ala-gamma-D-Glu-L-Lys-D-Ala-D-Ala)-di-trans,octa-cis-undecaprenyl diphosphate + UDP + H(+). The protein operates within cell wall biogenesis; peptidoglycan biosynthesis. Cell wall formation. Catalyzes the transfer of a GlcNAc subunit on undecaprenyl-pyrophosphoryl-MurNAc-pentapeptide (lipid intermediate I) to form undecaprenyl-pyrophosphoryl-MurNAc-(pentapeptide)GlcNAc (lipid intermediate II). In Latilactobacillus sakei subsp. sakei (strain 23K) (Lactobacillus sakei subsp. sakei), this protein is UDP-N-acetylglucosamine--N-acetylmuramyl-(pentapeptide) pyrophosphoryl-undecaprenol N-acetylglucosamine transferase.